We begin with the raw amino-acid sequence, 215 residues long: MLQVYLVRHGETLWNAARRIQGQSDSPLTEIGIRQAHLVAQRVRNQGITHIISSDLGRTQQTAKIIADACGLTMVTDPRLRELNMGVLENRPIDSLTPEEEQWRKQMVNGTEGARIPEGESMTELGRRMHAALDSCLELPAGSKPLLVSHGMALGCLLSTLLGLPAHAERRLRLRNCSLSRVDYQESPWLASGWVIESAGDTAHLDMPALDELQR.

Substrate contacts are provided by residues 8-15 (RHGETLWN), 21-22 (QG), arginine 58, 82-85 (ELNM), and 151-152 (GM). Catalysis depends on histidine 9, which acts as the Tele-phosphohistidine intermediate. Catalysis depends on glutamate 82, which acts as the Proton donor/acceptor.

Belongs to the phosphoglycerate mutase family. GpmB subfamily.

It carries out the reaction (2R)-2-phosphoglycerate = (2R)-3-phosphoglycerate. Its pathway is carbohydrate degradation; glycolysis; pyruvate from D-glyceraldehyde 3-phosphate: step 3/5. The chain is Probable phosphoglycerate mutase GpmB from Yersinia pseudotuberculosis serotype O:1b (strain IP 31758).